Consider the following 3301-residue polypeptide: Cadherin EGF LAG seven-pass G-type receptor 3 (3301 aa).

The N-terminal stretch at 1–31 is a signal peptide; it reads MARRPLWWGLPGPSTPVLLLLLLSLFPFSRE. The Extracellular segment spans residues 32 to 2531; the sequence is ELGGGGDQDW…RLEGDLELLA (2500 aa). Disordered regions lie at residues 148–189 and 202–314; these read LPLD…ARRS and KLWE…NRHP. Residues 267–276 show a composition bias toward basic residues; sequence MRSRGLFRRR. 9 consecutive Cadherin domains span residues 317 to 424, 425 to 536, 537 to 642, 643 to 747, 748 to 849, 850 to 952, 953 to 1058, 1059 to 1160, and 1161 to 1257; these read PQYN…APVF, EQAQ…APQF, SEKR…APIF, VSTP…RPEF, TMKE…RPVF, QSAH…APQF, VASH…APVF, PAEE…SPVL, and NNFQ…VVII. N-linked (GlcNAc...) asparagine glycosylation is present at Asn623. The N-linked (GlcNAc...) asparagine glycan is linked to Asn838. N-linked (GlcNAc...) asparagine glycosylation is found at Asn1173, Asn1213, Asn1308, and Asn1318. The EGF-like 1; calcium-binding domain maps to 1366 to 1424; sequence DDNVCLREPCENYMKCVSVLRFDSSAPFLASTSTLFRPIQPIAGLRCRCPPGFTGDFCE. 9 cysteine pairs are disulfide-bonded: Cys1370–Cys1381, Cys1375–Cys1412, Cys1414–Cys1423, Cys1430–Cys1441, Cys1435–Cys1450, Cys1452–Cys1459, Cys1468–Cys1479, Cys1473–Cys1489, and Cys1491–Cys1502. Residues 1426–1460 form the EGF-like 2; calcium-binding domain; the sequence is ELDLCYSNPCRNGGACARREGGYTCVCRPRFTDCE. In terms of domain architecture, EGF-like 3; calcium-binding spans 1464–1503; that stretch reads EAGRCVPGVCRNGGTCTNAPNGGFRCQCPAGGAFEGPRCE. The Laminin G-like 1 domain occupies 1504-1708; the sequence is VAARSFPPSS…VANNGTMAGC (205 aa). Asn1638 and Asn1702 each carry an N-linked (GlcNAc...) asparagine glycan. 4 disulfide bridges follow: Cys1682–Cys1708, Cys1715–Cys1726, Cys1720–Cys1735, and Cys1737–Cys1746. Positions 1711–1747 constitute an EGF-like 4; calcium-binding domain; it reads KSHFCASGPCKNNGFCSERWGGFSCDCPVGFGGKDCR. Residues 1751-1933 form the Laminin G-like 2 domain; the sequence is AHPYHFQGNG…SHRVNVEPGC (183 aa). Residue Asn1759 is glycosylated (N-linked (GlcNAc...) asparagine). 9 disulfide bridges follow: Cys1904/Cys1933, Cys1939/Cys1950, Cys1944/Cys1959, Cys1961/Cys1970, Cys1974/Cys1985, Cys1979/Cys1997, Cys1999/Cys2008, Cys2016/Cys2029, and Cys2031/Cys2041. Residues 1935–1971 form the EGF-like 5; calcium-binding domain; the sequence is VTNPCASGPCPPHADCKDLWQTFSCTCRPGYYGPGCV. Asp1952 bears the (3R)-3-hydroxyaspartate mark. One can recognise an EGF-like 6; calcium-binding domain in the interval 1972-2002; that stretch reads DACLLNPCQNQGSCRHLQGAPHGYTCDCVSG. The EGF-like 7; calcium-binding domain occupies 2003-2042; that stretch reads YFGQHCEHRVDQQCPRGWWGSPTCGPCNCDVHKGFDPNCN. The N-linked (GlcNAc...) asparagine glycan is linked to Asn2042. The EGF-like 8; calcium-binding domain maps to 2044–2079; sequence TNGQCHCKEFHYRPRGSDSCLPCDCYPVGSTSRSCA. Disulfide bonds link Cys2048/Cys2063, Cys2050/Cys2066, Cys2068/Cys2078, Cys2087/Cys2096, and Cys2099/Cys2111. Residues 2066 to 2113 form the Laminin EGF-like domain; the sequence is CDCYPVGSTSRSCAPHSGQCPCRPGALGRQCNSCDSPFAEVTASGCRV. Tyr2115 is subject to Phosphotyrosine. 5 N-linked (GlcNAc...) asparagine glycosylation sites follow: Asn2166, Asn2185, Asn2375, Asn2465, and Asn2497. Residues 2353-2388 form a disordered region; sequence LLPSQASQPSPSEVLPTSSNAENATASSVVSPPAPL. Residues 2355-2383 show a composition bias toward low complexity; the sequence is PSQASQPSPSEVLPTSSNAENATASSVVS. In terms of domain architecture, GAIN-B spans 2357–2521; it reads QASQPSPSEV…GVLMDASPRE (165 aa). Intrachain disulfides connect Cys2471-Cys2503 and Cys2491-Cys2505. The interval 2471 to 2521 is GPS; the sequence is CVQWDPPGPTDQHGMWTARDCELVHRNGSHARCRCSRTGTFGVLMDASPRE. The chain crosses the membrane as a helical span at residues 2532–2552; that stretch reads VFTHVVVAVSVTALVLTAAVL. Topologically, residues 2553–2563 are cytoplasmic; that stretch reads LSLRSLKSNVR. Residues 2564–2584 form a helical membrane-spanning segment; sequence GIHANVAAALGVAELLFLLGI. Residues 2585 to 2592 are Extracellular-facing; it reads HRTHNQLL. The helical transmembrane segment at 2593–2613 threads the bilayer; the sequence is CTAVAILLHYFFLSTFAWLLV. Residues 2614-2634 lie on the Cytoplasmic side of the membrane; that stretch reads QGLHLYRMQVEPRNVDRGAMR. Residues 2635–2655 traverse the membrane as a helical segment; that stretch reads FYHALGWGVPAVLLGLAVGLD. Residues 2656 to 2673 lie on the Extracellular side of the membrane; it reads PEGYGNPDFCWISIHEPL. The helical transmembrane segment at 2674–2694 threads the bilayer; sequence IWSFAGPIVLVIVMNGTMFLL. Residues 2695–2716 are Cytoplasmic-facing; the sequence is AARTSCSTGQREAKKTSVLTLR. A helical membrane pass occupies residues 2717 to 2737; it reads SSFLLLLLVSASWLFGLLAVN. Over 2738–2744 the chain is Extracellular; it reads HSILAFH. A helical transmembrane segment spans residues 2745–2765; the sequence is YLHAGLCGLQGLAVLLLFCVL. Topologically, residues 2766–3301 are cytoplasmic; that stretch reads NADARAAWTP…SEVPRSEGHS (536 aa). 3 disordered regions span residues 2823-2844, 2879-2919, and 2969-2992; these read SSAR…YLRD, AGAD…RPLR, and SNKD…TSLG. A compositionally biased stretch (acidic residues) spans 2881–2891; the sequence is ADSDSDSDLSL. The segment covering 2910–2919 has biased composition (basic residues); the sequence is TRGRFQRPLR. Tyr3042 carries the phosphotyrosine modification. A disordered region spans residues 3083–3301; it reads APVLHPLSRP…SEVPRSEGHS (219 aa). A Phosphoserine modification is found at Ser3090. Residues 3094-3111 are compositionally biased toward basic and acidic residues; that stretch reads SQERLDTAPARLEARDRG. Low complexity-rich tracts occupy residues 3168–3189 and 3239–3261; these read SPQR…SLSR and LSSI…STPS. The span at 3276–3289 shows a compositional bias: polar residues; the sequence is TPRSATSHSISELS.

It belongs to the G-protein coupled receptor 2 family. LN-TM7 subfamily. Expressed in the CNS and in the eye.

It is found in the cell membrane. In terms of biological role, receptor that may have an important role in cell/cell signaling during nervous system formation. This is Cadherin EGF LAG seven-pass G-type receptor 3 (Celsr3) from Mus musculus (Mouse).